An 861-amino-acid polypeptide reads, in one-letter code: Probable linoleate 9S-lipoxygenase 3 (861 aa).

Residues 33–160 form the PLAT domain; sequence FTDLASSLTG…NYKSDRIFFA (128 aa). Residues 163–861 enclose the Lipoxygenase domain; sequence PYLPSDTPEL…GKGIPNSVSI (699 aa). The segment at 220-247 is disordered; sequence TLGGSAEYPYPRRGRTGRPPTRTDPKSE. Fe cation is bound by residues histidine 522, histidine 527, histidine 713, asparagine 717, and isoleucine 861.

Belongs to the lipoxygenase family. Monomer. It depends on Fe cation as a cofactor. Expressed in tubers and roots. Not detected in leaves, flowers, stems, shoot tips, or axillary buds.

Its subcellular location is the cytoplasm. The enzyme catalyses (9Z,12Z)-octadecadienoate + O2 = (9S)-hydroperoxy-(10E,12Z)-octadecadienoate. It functions in the pathway lipid metabolism; oxylipin biosynthesis. Plant lipoxygenases may be involved in a number of diverse aspects of plant physiology including growth and development, pest resistance, and senescence or responses to wounding. Catalyzes the hydroperoxidation of lipids containing a cis,cis-1,4-pentadiene structure. The polypeptide is Probable linoleate 9S-lipoxygenase 3 (LOX1.3) (Solanum tuberosum (Potato)).